A 577-amino-acid polypeptide reads, in one-letter code: Proline--tRNA ligase (577 aa).

The protein belongs to the class-II aminoacyl-tRNA synthetase family. ProS type 1 subfamily. Homodimer.

Its subcellular location is the cytoplasm. The catalysed reaction is tRNA(Pro) + L-proline + ATP = L-prolyl-tRNA(Pro) + AMP + diphosphate. Catalyzes the attachment of proline to tRNA(Pro) in a two-step reaction: proline is first activated by ATP to form Pro-AMP and then transferred to the acceptor end of tRNA(Pro). As ProRS can inadvertently accommodate and process non-cognate amino acids such as alanine and cysteine, to avoid such errors it has two additional distinct editing activities against alanine. One activity is designated as 'pretransfer' editing and involves the tRNA(Pro)-independent hydrolysis of activated Ala-AMP. The other activity is designated 'posttransfer' editing and involves deacylation of mischarged Ala-tRNA(Pro). The misacylated Cys-tRNA(Pro) is not edited by ProRS. In Janthinobacterium sp. (strain Marseille) (Minibacterium massiliensis), this protein is Proline--tRNA ligase.